The following is a 370-amino-acid chain: MKINNSLLNFVNGMLVTLPSSKTLTLSWNFGSMLGMVLVFQIVTGTFLAFYYTPDSLMAFSTVQYIMYEVNFGWIFRIFHFNGASLFFIFLYLHIFKGLFFMSYRLKKVWMSGLTIYLLVMMEAFMGYVLVWAQMSFWAAVVITSLLSVIPIWGPTIVTWIWSGFGVTGATLKFFFVLHFLLPWAILFIVLGHLIFLHSTGSTSSLYCHGDYDKVCFSPEYIGKDAYNIVVWLVFIVLSLIYPFNLGDAEMFIEADPMMSPVHIVPEWYFLFAYAILRAIPNKVLGVIALLMSIVTFYFFALVNNYTSCLTKLNKFLVFLFIISSVILSWLGQCMVEDPFTVLSPLFSVIYFGLAYLLLGIFMTSKLLFK.

Helical transmembrane passes span 30-50 (FGSMLGMVLVFQIVTGTFLAF), 74-96 (WIFRIFHFNGASLFFIFLYLHIF), 109-129 (VWMSGLTIYLLVMMEAFMGYV), and 175-195 (FFVLHFLLPWAILFIVLGHLI). 2 residues coordinate heme b: His-80 and His-94. The heme b site is built by His-179 and His-193. His-198 contacts a ubiquinone. 4 consecutive transmembrane segments (helical) span residues 221-240 (YIGKDAYNIVVWLVFIVLSL), 284-304 (VLGVIALLMSIVTFYFFALVN), 316-336 (FLVFLFIISSVILSWLGQCMV), and 342-362 (VLSPLFSVIYFGLAYLLLGIF).

The protein belongs to the cytochrome b family. As to quaternary structure, the main subunits of complex b-c1 are: cytochrome b, cytochrome c1 and the Rieske protein. Heme b is required as a cofactor.

The protein resides in the mitochondrion inner membrane. Component of the ubiquinol-cytochrome c reductase complex (complex III or cytochrome b-c1 complex) that is part of the mitochondrial respiratory chain. The b-c1 complex mediates electron transfer from ubiquinol to cytochrome c. Contributes to the generation of a proton gradient across the mitochondrial membrane that is then used for ATP synthesis. This is Cytochrome b (ctb-1) from Caenorhabditis briggsae.